The sequence spans 309 residues: L-lactate dehydrogenase (309 aa).

NAD(+) is bound by residues V12, D33, R38, Y63, and G77–A78. Residues Q80, R86, and N118 to D121 contribute to the substrate site. NAD(+) is bound by residues A116–N118 and S141. D146 to R149 contacts substrate. Beta-D-fructose 1,6-bisphosphate-binding residues include R151 and H166. H173 functions as the Proton acceptor in the catalytic mechanism. Y219 is subject to Phosphotyrosine. T228 contacts substrate.

This sequence belongs to the LDH/MDH superfamily. LDH family. As to quaternary structure, homotetramer.

It is found in the cytoplasm. It catalyses the reaction (S)-lactate + NAD(+) = pyruvate + NADH + H(+). Its pathway is fermentation; pyruvate fermentation to lactate; (S)-lactate from pyruvate: step 1/1. With respect to regulation, allosterically activated by fructose 1,6-bisphosphate (FBP). In terms of biological role, catalyzes the conversion of lactate to pyruvate. In Nitratidesulfovibrio vulgaris (strain ATCC 29579 / DSM 644 / CCUG 34227 / NCIMB 8303 / VKM B-1760 / Hildenborough) (Desulfovibrio vulgaris), this protein is L-lactate dehydrogenase.